A 363-amino-acid chain; its full sequence is Flagellar P-ring protein (363 aa).

The first 20 residues, methionine 1–alanine 20, serve as a signal peptide directing secretion.

The protein belongs to the FlgI family. As to quaternary structure, the basal body constitutes a major portion of the flagellar organelle and consists of four rings (L,P,S, and M) mounted on a central rod.

The protein localises to the periplasm. Its subcellular location is the bacterial flagellum basal body. Functionally, assembles around the rod to form the L-ring and probably protects the motor/basal body from shearing forces during rotation. The sequence is that of Flagellar P-ring protein from Shewanella amazonensis (strain ATCC BAA-1098 / SB2B).